We begin with the raw amino-acid sequence, 267 residues long: DNA damage-regulated autophagy modulator protein 2 (267 aa).

6 helical membrane passes run 8-28 (LSFLPSALVIWTFATFIFSYI), 53-73 (RCLFGVMLNIAAVLGIATIYV), 87-107 (LIIKLNKAGLVLGILSCLGLS), 118-138 (FIVHVCGAVLAFSMGSFYMFV), 160-180 (LLLVIWCGVSALSMMTCSSIL), and 203-223 (VLHIVTTAAEWSMSFSFFGFF).

The protein belongs to the DRAM/TMEM150 family.

The protein localises to the lysosome membrane. Its subcellular location is the photoreceptor inner segment. The protein resides in the apical cell membrane. In terms of biological role, plays a role in the initiation of autophagy. In the retina, might be involved in the process of photoreceptor cells renewal and recycling to preserve visual function. Induces apoptotic cell death when coexpressed with DRAM1. In Rattus norvegicus (Rat), this protein is DNA damage-regulated autophagy modulator protein 2 (Dram2).